Consider the following 811-residue polypeptide: Lysine-specific histone demethylase 1 homolog 3 (811 aa).

A compositionally biased stretch (pro residues) spans 1–10 (MSDQPPPYTP). The disordered stretch occupies residues 1–79 (MSDQPPPYTP…PSAQPPPRAS (79 aa)). Residues 44–55 (NKRKRTGFRRKL) are compositionally biased toward basic residues. Over residues 56–71 (PSGSPAAPVAVAASPS) the composition is skewed to low complexity. The SWIRM domain maps to 88–189 (NREPTAEAVT…FGVAPAIKER (102 aa)). Positions 227, 229, 235, and 609 each coordinate FAD. Positions 790–811 (RNSSRTKTRPSKLKIGIPKSKS) are disordered.

The protein belongs to the flavin monoamine oxidase family. The cofactor is FAD.

In terms of biological role, probable histone demethylase. The polypeptide is Lysine-specific histone demethylase 1 homolog 3 (Oryza sativa subsp. indica (Rice)).